Reading from the N-terminus, the 181-residue chain is Large ribosomal subunit protein uL5 (181 aa).

Belongs to the universal ribosomal protein uL5 family. In terms of assembly, part of the 50S ribosomal subunit; part of the 5S rRNA/L5/L18/L25 subcomplex. Contacts the 5S rRNA and the P site tRNA. Forms a bridge to the 30S subunit in the 70S ribosome.

Its function is as follows. This is one of the proteins that bind and probably mediate the attachment of the 5S RNA into the large ribosomal subunit, where it forms part of the central protuberance. In the 70S ribosome it contacts protein S13 of the 30S subunit (bridge B1b), connecting the 2 subunits; this bridge is implicated in subunit movement. Contacts the P site tRNA; the 5S rRNA and some of its associated proteins might help stabilize positioning of ribosome-bound tRNAs. This Mesomycoplasma hyopneumoniae (strain 232) (Mycoplasma hyopneumoniae) protein is Large ribosomal subunit protein uL5.